Here is a 150-residue protein sequence, read N- to C-terminus: Large ribosomal subunit protein bL9 (150 aa).

Belongs to the bacterial ribosomal protein bL9 family.

Its function is as follows. Binds to the 23S rRNA. This is Large ribosomal subunit protein bL9 from Lactococcus lactis subsp. cremoris (strain SK11).